The sequence spans 190 residues: Female-specific histamine-binding protein 2 (190 aa).

The N-terminal stretch at 1 to 19 (MKLLILSLALVLALSQVKG) is a signal peptide. Histamine-binding residues include serine 39, aspartate 43, tyrosine 55, aspartate 58, tryptophan 61, glutamate 101, phenylalanine 117, tyrosine 119, phenylalanine 127, aspartate 139, glutamate 154, and tryptophan 156. 2 disulfides stabilise this stretch: cysteine 67/cysteine 188 and cysteine 138/cysteine 167.

The protein belongs to the calycin superfamily. Histamine-binding salivary protein family. In terms of assembly, monomer. Expressed in salivary glands.

It localises to the secreted. Its function is as follows. Salivary tick protein that acts by scavenging histamine at the wound site, outcompeting histamine receptors for histamine, thereby overcoming host inflammatory responses. Binds histamine with a high-affinity (Kd=1.7 nM). Contains two binding histamine sites (H and L), that appear to bind histamine with differing affinities (high and low). The sequence is that of Female-specific histamine-binding protein 2 from Rhipicephalus appendiculatus (Brown ear tick).